The following is a 227-amino-acid chain: Orotate phosphoribosyltransferase 2 (227 aa).

Residue 41 to 42 (FF) coordinates orotate. 5-phospho-alpha-D-ribose 1-diphosphate is bound by residues 79–80 (YK), Arg-109, Lys-110, Lys-113, His-115, and 135–143 (DDVMTAGTA). Orotate is bound by residues Thr-139 and Arg-167.

Belongs to the purine/pyrimidine phosphoribosyltransferase family. PyrE subfamily. Homodimer.

The enzyme catalyses orotidine 5'-phosphate + diphosphate = orotate + 5-phospho-alpha-D-ribose 1-diphosphate. It functions in the pathway pyrimidine metabolism; UMP biosynthesis via de novo pathway; UMP from orotate: step 1/2. Its function is as follows. Catalyzes the transfer of a ribosyl phosphate group from 5-phosphoribose 1-diphosphate to orotate, leading to the formation of orotidine monophosphate (OMP). In Saccharomyces cerevisiae (strain ATCC 204508 / S288c) (Baker's yeast), this protein is Orotate phosphoribosyltransferase 2 (URA10).